We begin with the raw amino-acid sequence, 490 residues long: Probable cytosol aminopeptidase (490 aa).

2 residues coordinate Mn(2+): K262 and D267. Residue K274 is part of the active site. Residues D285, D344, and E346 each coordinate Mn(2+). R348 is a catalytic residue.

This sequence belongs to the peptidase M17 family. It depends on Mn(2+) as a cofactor.

The protein resides in the cytoplasm. The catalysed reaction is Release of an N-terminal amino acid, Xaa-|-Yaa-, in which Xaa is preferably Leu, but may be other amino acids including Pro although not Arg or Lys, and Yaa may be Pro. Amino acid amides and methyl esters are also readily hydrolyzed, but rates on arylamides are exceedingly low.. The enzyme catalyses Release of an N-terminal amino acid, preferentially leucine, but not glutamic or aspartic acids.. Functionally, presumably involved in the processing and regular turnover of intracellular proteins. Catalyzes the removal of unsubstituted N-terminal amino acids from various peptides. This chain is Probable cytosol aminopeptidase, found in Xanthomonas axonopodis pv. citri (strain 306).